A 334-amino-acid polypeptide reads, in one-letter code: Myo-inositol 2-dehydrogenase (334 aa).

The protein belongs to the Gfo/Idh/MocA family.

The catalysed reaction is myo-inositol + NAD(+) = scyllo-inosose + NADH + H(+). The protein operates within polyol metabolism; myo-inositol metabolism. In terms of biological role, catalyzes the NAD(+)-dependent oxidation of myo-inositol (MI) to 2-keto-myo-inositol (scyllo-inosose), and thus probably functions in a myo-inositol degradation pathway together with IolM, IolN and IolO. Has no activity with scyllo-inositol and much reduced activity (78-fold lower catalytic efficiency) with 1D-chiro-inositol. This is Myo-inositol 2-dehydrogenase from Thermotoga maritima (strain ATCC 43589 / DSM 3109 / JCM 10099 / NBRC 100826 / MSB8).